A 425-amino-acid chain; its full sequence is Histidine--tRNA ligase (425 aa).

The protein belongs to the class-II aminoacyl-tRNA synthetase family. In terms of assembly, homodimer.

It is found in the cytoplasm. It carries out the reaction tRNA(His) + L-histidine + ATP = L-histidyl-tRNA(His) + AMP + diphosphate + H(+). The chain is Histidine--tRNA ligase from Shewanella sp. (strain ANA-3).